We begin with the raw amino-acid sequence, 601 residues long: Elongation factor 4 (601 aa).

Positions 6-188 constitute a tr-type G domain; the sequence is SHIRNFSIIA…QIVHRVPAPE (183 aa). GTP-binding positions include 18-23 and 135-138; these read DHGKST and NKID.

This sequence belongs to the TRAFAC class translation factor GTPase superfamily. Classic translation factor GTPase family. LepA subfamily.

It is found in the cell inner membrane. The catalysed reaction is GTP + H2O = GDP + phosphate + H(+). Required for accurate and efficient protein synthesis under certain stress conditions. May act as a fidelity factor of the translation reaction, by catalyzing a one-codon backward translocation of tRNAs on improperly translocated ribosomes. Back-translocation proceeds from a post-translocation (POST) complex to a pre-translocation (PRE) complex, thus giving elongation factor G a second chance to translocate the tRNAs correctly. Binds to ribosomes in a GTP-dependent manner. The polypeptide is Elongation factor 4 (Anaeromyxobacter dehalogenans (strain 2CP-1 / ATCC BAA-258)).